The primary structure comprises 507 residues: Cytochrome P450 71A4 (507 aa).

Residues 3–23 (VPCLWYSLLILLLLFIFLLIH) traverse the membrane as a helical segment. Residue cysteine 448 participates in heme binding.

It belongs to the cytochrome P450 family. The cofactor is heme.

Its subcellular location is the membrane. In terms of biological role, may have a role in maturation, such as during flavor formation or other metabolite production specific to aging tissues. The protein is Cytochrome P450 71A4 (CYP71A4) of Solanum melongena (Eggplant).